The primary structure comprises 201 residues: Recombination protein RecR (201 aa).

The segment at 60 to 75 (CSCCGNVDTSDPCTIC) adopts a C4-type zinc-finger fold. In terms of domain architecture, Toprim spans 83 to 178 (ATLIVVEDVS…RVTRLAHGVP (96 aa)).

Belongs to the RecR family.

Its function is as follows. May play a role in DNA repair. It seems to be involved in an RecBC-independent recombinational process of DNA repair. It may act with RecF and RecO. The protein is Recombination protein RecR of Brucella ovis (strain ATCC 25840 / 63/290 / NCTC 10512).